The chain runs to 186 residues: Elongation factor P (186 aa).

Belongs to the elongation factor P family.

It localises to the cytoplasm. It functions in the pathway protein biosynthesis; polypeptide chain elongation. Involved in peptide bond synthesis. Stimulates efficient translation and peptide-bond synthesis on native or reconstituted 70S ribosomes in vitro. Probably functions indirectly by altering the affinity of the ribosome for aminoacyl-tRNA, thus increasing their reactivity as acceptors for peptidyl transferase. This Mycoplasmopsis synoviae (strain 53) (Mycoplasma synoviae) protein is Elongation factor P.